A 473-amino-acid polypeptide reads, in one-letter code: LEC14B protein (473 aa).

WD repeat units follow at residues 212 to 242, 254 to 285, 301 to 331, 377 to 413, and 425 to 455; these read GYSF…CVYD, AHES…KVWD, GHLE…KLWD, GHSV…YIYD, and YHKA…VKWE.

Belongs to the WD repeat LEC14B family.

This chain is LEC14B protein, found in Lithospermum erythrorhizon (Purple gromwell).